A 1179-amino-acid chain; its full sequence is Serine/threonine-protein kinase pakG (1179 aa).

Positions 12–53 form a coiled coil; that stretch reads SKTNEDIELIKQKLKEDRELLEKERAQFEEERKIIFESLNKV. In terms of domain architecture, CRIB spans 111-124; sequence IGTPFNVQHKVHVD. The region spanning 139–390 is the Protein kinase domain; that stretch reads FLIDCILGTG…AIELLTHPFL (252 aa). ATP-binding positions include 145–153 and Lys-168; that span reads LGTGSYGTV. The active-site Proton acceptor is the Asp-257. Disordered stretches follow at residues 414-469, 589-631, 705-1086, and 1121-1179; these read KKKK…SSLD, IGNS…NNNN, SSSS…PITL, and TEIN…SPKK. Positions 621–668 form a coiled coil; the sequence is NNNNNNNNNNNEFLINQIKKELILDFNENMKQYINQQLTNLKEEMLKE. Low complexity-rich tracts occupy residues 705–723 and 743–761; these read SSSSSSSFLNSSPSSSNSS and LPPSQQSTPVTTTTTTSSP. Over residues 762–776 the composition is skewed to pro residues; sequence SPSPSPSPSPSPSSP. Composition is skewed to low complexity over residues 777 to 788 and 812 to 833; these read LPSSSTSTVNTP and NNNNTNNNNNNNNSNNNNNNNN. Residues 834–857 are compositionally biased toward polar residues; it reads VIQSPKLNNRPLSPTTPTKQFNNR. Residues 864–891 show a composition bias toward low complexity; the sequence is FNNRPPSPSKFNNRPPSPSNRPLSPKNS. The span at 892 to 946 shows a compositional bias: polar residues; the sequence is YNSLEKSNNGSISNNRPLSPKNSLEKSTTQNNTSSEDISTTTVTVTSEQGGTPIT. Residues 954–963 are compositionally biased toward pro residues; it reads RPKPSPPPIP. Low complexity-rich tracts occupy residues 964–997, 1024–1046, and 1053–1077; these read MNKSSPKRAPSPSSNRRLSSSFTAQSSTASTIAA, TTITSSTNSPIKPLSPLNKSPNS, and ITTSNISNNSNINNNNNNNSNSSSN. The span at 1121–1135 shows a compositional bias: polar residues; sequence TEINLPSSSPSTPQK. A compositionally biased stretch (low complexity) spans 1137 to 1158; sequence NTPSSIPTTPTTPTTNGGSVSS.

Belongs to the protein kinase superfamily. STE Ser/Thr protein kinase family. STE20 subfamily. It depends on Mg(2+) as a cofactor.

It catalyses the reaction L-seryl-[protein] + ATP = O-phospho-L-seryl-[protein] + ADP + H(+). It carries out the reaction L-threonyl-[protein] + ATP = O-phospho-L-threonyl-[protein] + ADP + H(+). The polypeptide is Serine/threonine-protein kinase pakG (Dictyostelium discoideum (Social amoeba)).